A 206-amino-acid polypeptide reads, in one-letter code: CASP-like protein 4B2 (206 aa).

Low complexity-rich tracts occupy residues 1–12 (MAMVPADADAAA) and 24–36 (SSQN…AAAA). Residues 1-42 (MAMVPADADAAAKPPPDVEKPDYSSQNGAPNSAAAAAGGGGG) are disordered. Residues 1-60 (MAMVPADADAAAKPPPDVEKPDYSSQNGAPNSAAAAAGGGGGGVVDSVVARWRREDMLDK) lie on the Cytoplasmic side of the membrane. Residues 61–81 (SPLALHAAAAAFAFVALVLVA) form a helical membrane-spanning segment. The Extracellular portion of the chain corresponds to 82 to 99 (SNQHGDWMEFDRYQEYRY). Residues 100–120 (LLAIAALAFAYSLAQALRHAL) form a helical membrane-spanning segment. Residues 121 to 138 (RMRRGVDPVPTASGRLLD) lie on the Cytoplasmic side of the membrane. A helical membrane pass occupies residues 139–159 (FASDQVVAYLLMSALSAATPI). Topologically, residues 160–174 (TNRMRSAVINRFTDT) are extracellular. Residues 175 to 195 (TAAAISMAFLAFVSLALSAIV) traverse the membrane as a helical segment. The Cytoplasmic segment spans residues 196 to 206 (SGYKLSKQTYM).

The protein belongs to the Casparian strip membrane proteins (CASP) family. In terms of assembly, homodimer and heterodimers.

It is found in the cell membrane. The protein is CASP-like protein 4B2 of Oryza sativa subsp. japonica (Rice).